Consider the following 124-residue polypeptide: Large ribosomal subunit protein uL14 (124 aa).

This sequence belongs to the universal ribosomal protein uL14 family. In terms of assembly, part of the 50S ribosomal subunit. Forms a cluster with proteins L3 and L19. In the 70S ribosome, L14 and L19 interact and together make contacts with the 16S rRNA in bridges B5 and B8.

Its function is as follows. Binds to 23S rRNA. Forms part of two intersubunit bridges in the 70S ribosome. The sequence is that of Large ribosomal subunit protein uL14 from Clostridium novyi (strain NT).